We begin with the raw amino-acid sequence, 542 residues long: Calcium/calmodulin-dependent protein kinase type II subunit beta (542 aa).

Positions 14–272 constitute a Protein kinase domain; it reads YQLYEDIGKG…AHEALKHPWV (259 aa). At tyrosine 17 the chain carries Phosphotyrosine. Residues 20-28 and lysine 43 each bind ATP; that span reads IGKGAFSVV. The active-site Proton acceptor is the aspartate 136. The autoinhibitory domain stretch occupies residues 283-292; sequence HRQETVECLK. Threonine 287 carries the post-translational modification Phosphothreonine; by autocatalysis. Positions 291–301 are calmodulin-binding; the sequence is LKKFNARRKLK. 2 positions are modified to phosphothreonine; by autocatalysis: threonine 306 and threonine 307. The disordered stretch occupies residues 349–376; it reads ADGVKPQTNSTKNSSAITSPKGSLPPAA. Residues 354–369 show a composition bias toward polar residues; that stretch reads PQTNSTKNSSAITSPK. Phosphoserine is present on residues serine 367, serine 371, serine 394, and serine 397. Residues threonine 400 and threonine 401 each carry the phosphothreonine modification.

This sequence belongs to the protein kinase superfamily. CAMK Ser/Thr protein kinase family. CaMK subfamily. CAMK2 is composed of 4 different chains: alpha (CAMK2A), beta (CAMK2B), gamma (CAMK2G), and delta (CAMK2D). The different isoforms assemble into homo- or heteromultimeric holoenzymes composed of 12 subunits with two hexameric rings stacked one on top of the other. Interacts with SYNGAP1, CAMK2N2 and MPDZ. Interacts with FOXO3. Interacts (when in a kinase inactive state not associated with calmodulin) with ARC; leading to target ARC to inactive synapses. Interacts with CAMK2N1; this interaction requires CAMK2B activation by Ca(2+). In terms of processing, autophosphorylation of Thr-287 following activation by Ca(2+)/calmodulin. Phosphorylation of Thr-287 locks the kinase into an activated state.

It localises to the cytoplasm. The protein resides in the cytoskeleton. Its subcellular location is the microtubule organizing center. It is found in the centrosome. The protein localises to the sarcoplasmic reticulum membrane. It localises to the synapse. It carries out the reaction L-seryl-[protein] + ATP = O-phospho-L-seryl-[protein] + ADP + H(+). It catalyses the reaction L-threonyl-[protein] + ATP = O-phospho-L-threonyl-[protein] + ADP + H(+). Activated by Ca(2+)/calmodulin. Binding of calmodulin results in conformational change that relieves intrasteric autoinhibition and allows autophosphorylation of Thr-287 which turns the kinase in a constitutively active form and confers to the kinase a Ca(2+)-independent activity. Calcium/calmodulin-dependent protein kinase that functions autonomously after Ca(2+)/calmodulin-binding and autophosphorylation, and is involved in dendritic spine and synapse formation, neuronal plasticity and regulation of sarcoplasmic reticulum Ca(2+) transport in skeletal muscle. In neurons, plays an essential structural role in the reorganization of the actin cytoskeleton during plasticity by binding and bundling actin filaments in a kinase-independent manner. This structural function is required for correct targeting of CaMK2A, which acts downstream of NMDAR to promote dendritic spine and synapse formation and maintain synaptic plasticity which enables long-term potentiation (LTP) and hippocampus-dependent learning. In developing hippocampal neurons, promotes arborization of the dendritic tree and in mature neurons, promotes dendritic remodeling. Also regulates the migration of developing neurons. Participates in the modulation of skeletal muscle function in response to exercise. In slow-twitch muscles, is involved in regulation of sarcoplasmic reticulum (SR) Ca(2+) transport and in fast-twitch muscle participates in the control of Ca(2+) release from the SR through phosphorylation of triadin, a ryanodine receptor-coupling factor, and phospholamban (PLN/PLB), an endogenous inhibitor of SERCA2A/ATP2A2. In response to interferon-gamma (IFN-gamma) stimulation, catalyzes phosphorylation of STAT1, stimulating the JAK-STAT signaling pathway. Phosphorylates reticulophagy regulator RETREG1 at 'Thr-134' under endoplasmic reticulum stress conditions which enhances RETREG1 oligomerization and its membrane scission and reticulophagy activity. The chain is Calcium/calmodulin-dependent protein kinase type II subunit beta (Camk2b) from Mus musculus (Mouse).